Reading from the N-terminus, the 200-residue chain is LexA repressor (200 aa).

The segment at residues 28-48 (RAEIARILGFKSANAAEEHIK) is a DNA-binding region (H-T-H motif). Active-site for autocatalytic cleavage activity residues include Ser-118 and Lys-155.

This sequence belongs to the peptidase S24 family. Homodimer.

The enzyme catalyses Hydrolysis of Ala-|-Gly bond in repressor LexA.. Its function is as follows. Represses a number of genes involved in the response to DNA damage (SOS response), including recA and lexA. In the presence of single-stranded DNA, RecA interacts with LexA causing an autocatalytic cleavage which disrupts the DNA-binding part of LexA, leading to derepression of the SOS regulon and eventually DNA repair. This chain is LexA repressor, found in Cellvibrio japonicus (strain Ueda107) (Pseudomonas fluorescens subsp. cellulosa).